The chain runs to 284 residues: Homeobox protein six1b (284 aa).

The segment at residues 124–183 (GEETSYCFKEKSRGVLREWYTHNPYPSPREKRELAEATGLTTTQVSNWFKNRRQRDRAAE) is a DNA-binding region (homeobox). The disordered stretch occupies residues 167-238 (QVSNWFKNRR…NSVLLLQGNM (72 aa)). The span at 179–190 (DRAAEAKERENS) shows a compositional bias: basic and acidic residues. Composition is skewed to polar residues over residues 191–204 (ENNN…NQLS) and 226–238 (PDQN…QGNM).

It belongs to the SIX/Sine oculis homeobox family. As to quaternary structure, interacts with eya1.

Its subcellular location is the nucleus. It localises to the cytoplasm. Functionally, transcription factor that is involved in the regulation of cell proliferation, apoptosis and embryonic development. Depending on context, functions as a transcriptional repressor or activator. Transcriptional activation is enhanced by eya1 (in vitro). Plays an important role in the development of the inner ear, where it promotes hair cell proliferation and inhibits proliferation of neural progenitor cells. Required for normal myogenesis. Plays a role in the development of fast muscle fibers throughout the body, as well as the development of craniofacial muscles. Required for normal expression of myod1 and myog during myogenesis. The protein is Homeobox protein six1b (six1b) of Danio rerio (Zebrafish).